The sequence spans 457 residues: Dynein regulatory complex protein 10 (457 aa).

Coiled-coil stretches lie at residues E101–R127, I209–V258, and Q292–E381. The 30-residue stretch at M397–K426 folds into the IQ domain. Positions S419–K457 are disordered. A compositionally biased stretch (basic and acidic residues) spans K428–K445. Basic residues predominate over residues E446–K457.

Belongs to the DRC10 family. Component of the nexin-dynein regulatory complex (N-DRC). Interacts with CFAP52.

It is found in the cytoplasm. The protein resides in the cytoskeleton. It localises to the flagellum axoneme. Its function is as follows. Component of the nexin-dynein regulatory complex (N-DRC), a key regulator of ciliary/flagellar motility which maintains the alignment and integrity of the distal axoneme and regulates microtubule sliding in motile axonemes. This Rattus norvegicus (Rat) protein is Dynein regulatory complex protein 10 (Iqcd).